A 336-amino-acid polypeptide reads, in one-letter code: Holliday junction branch migration complex subunit RuvB (336 aa).

Residues 4 to 184 (ADRLISAGAT…FGIVQRLEFY (181 aa)) form a large ATPase domain (RuvB-L) region. ATP is bound by residues Ile-23, Arg-24, Gly-65, Lys-68, Thr-69, Thr-70, 131–133 (EDY), Arg-174, Tyr-184, and Arg-221. Thr-69 serves as a coordination point for Mg(2+). Positions 185-255 (QVPDLQHIVG…IAAQALDMLN (71 aa)) are small ATPAse domain (RuvB-S). The segment at 258 to 336 (AEGFDYMDRK…HFGITPPEMP (79 aa)) is head domain (RuvB-H). DNA contacts are provided by Arg-294, Arg-313, and Arg-318.

It belongs to the RuvB family. In terms of assembly, homohexamer. Forms an RuvA(8)-RuvB(12)-Holliday junction (HJ) complex. HJ DNA is sandwiched between 2 RuvA tetramers; dsDNA enters through RuvA and exits via RuvB. An RuvB hexamer assembles on each DNA strand where it exits the tetramer. Each RuvB hexamer is contacted by two RuvA subunits (via domain III) on 2 adjacent RuvB subunits; this complex drives branch migration. In the full resolvosome a probable DNA-RuvA(4)-RuvB(12)-RuvC(2) complex forms which resolves the HJ.

The protein resides in the cytoplasm. The enzyme catalyses ATP + H2O = ADP + phosphate + H(+). The RuvA-RuvB-RuvC complex processes Holliday junction (HJ) DNA during genetic recombination and DNA repair, while the RuvA-RuvB complex plays an important role in the rescue of blocked DNA replication forks via replication fork reversal (RFR). RuvA specifically binds to HJ cruciform DNA, conferring on it an open structure. The RuvB hexamer acts as an ATP-dependent pump, pulling dsDNA into and through the RuvAB complex. RuvB forms 2 homohexamers on either side of HJ DNA bound by 1 or 2 RuvA tetramers; 4 subunits per hexamer contact DNA at a time. Coordinated motions by a converter formed by DNA-disengaged RuvB subunits stimulates ATP hydrolysis and nucleotide exchange. Immobilization of the converter enables RuvB to convert the ATP-contained energy into a lever motion, pulling 2 nucleotides of DNA out of the RuvA tetramer per ATP hydrolyzed, thus driving DNA branch migration. The RuvB motors rotate together with the DNA substrate, which together with the progressing nucleotide cycle form the mechanistic basis for DNA recombination by continuous HJ branch migration. Branch migration allows RuvC to scan DNA until it finds its consensus sequence, where it cleaves and resolves cruciform DNA. This is Holliday junction branch migration complex subunit RuvB from Salmonella agona (strain SL483).